Reading from the N-terminus, the 512-residue chain is Probable malate:quinone oxidoreductase (512 aa).

It belongs to the MQO family. FAD serves as cofactor.

It catalyses the reaction (S)-malate + a quinone = a quinol + oxaloacetate. It participates in carbohydrate metabolism; tricarboxylic acid cycle; oxaloacetate from (S)-malate (quinone route): step 1/1. The chain is Probable malate:quinone oxidoreductase from Rhodococcus erythropolis (strain PR4 / NBRC 100887).